We begin with the raw amino-acid sequence, 252 residues long: Ubiquitin carboxyl-terminal hydrolase isozyme L1 (252 aa).

An N-acetylmethionine modification is found at M1. A UCH catalytic domain is found at 2–250 (QLKPMEINPE…VRFSAVALCK (249 aa)). Residues 5 to 10 (PMEINP) are interaction with ubiquitin. C119 (nucleophile) is an active-site residue. S154 bears the Phosphoserine mark. The active-site Proton donor is the H190. Positions 240–245 (EVRFSA) are interaction with ubiquitin. C249 carries the S-farnesyl cysteine lipid modification. The propeptide at 250-252 (KAA) is removed in mature form.

Belongs to the peptidase C12 family. Monomer. Homodimer. Interacts with COPS5 and SNCA. O-glycosylated. In terms of tissue distribution, neurons and cells of the diffuse neuroendocrine system and their tumors.

It localises to the cytoplasm. It is found in the endoplasmic reticulum membrane. The enzyme catalyses Thiol-dependent hydrolysis of ester, thioester, amide, peptide and isopeptide bonds formed by the C-terminal Gly of ubiquitin (a 76-residue protein attached to proteins as an intracellular targeting signal).. Functionally, ubiquitin-protein hydrolase involved both in the processing of ubiquitin precursors and of ubiquitinated proteins. This enzyme is a thiol protease that recognizes and hydrolyzes a peptide bond at the C-terminal glycine of ubiquitin. Also binds to free monoubiquitin and may prevent its degradation in lysosomes. The homodimer may have ATP-independent ubiquitin ligase activity. The sequence is that of Ubiquitin carboxyl-terminal hydrolase isozyme L1 (UCHL1) from Bos taurus (Bovine).